Here is a 292-residue protein sequence, read N- to C-terminus: Elongation factor Ts (292 aa).

The tract at residues Thr-81–Val-84 is involved in Mg(2+) ion dislocation from EF-Tu.

It belongs to the EF-Ts family.

Its subcellular location is the cytoplasm. Associates with the EF-Tu.GDP complex and induces the exchange of GDP to GTP. It remains bound to the aminoacyl-tRNA.EF-Tu.GTP complex up to the GTP hydrolysis stage on the ribosome. The protein is Elongation factor Ts of Alkalilimnicola ehrlichii (strain ATCC BAA-1101 / DSM 17681 / MLHE-1).